Consider the following 281-residue polypeptide: Succinate dehydrogenase [ubiquinone] iron-sulfur subunit 1, mitochondrial (281 aa).

The N-terminal 25 residues, 1-25 (MAAAALLRRSPAARALLSPALSSRL), are a transit peptide targeting the mitochondrion. The segment at 26–48 (VASKPHSSSPAPPPPPSKAGANT) is disordered. In terms of domain architecture, 2Fe-2S ferredoxin-type spans 49 to 141 (KTFSIYRWDP…ASTISPLPHM (93 aa)). C102, C107, and C122 together coordinate [2Fe-2S] cluster. The 31-residue stretch at 184 to 214 (DRAKLDGMYECILCACCSTSCPSYWWNPEEY) folds into the 4Fe-4S ferredoxin-type domain. Positions 194, 197, and 200 each coordinate [4Fe-4S] cluster. C204 contacts [3Fe-4S] cluster. W209 serves as a coordination point for a ubiquinone. The [3Fe-4S] cluster site is built by C251 and C257. C261 is a [4Fe-4S] cluster binding site.

This sequence belongs to the succinate dehydrogenase/fumarate reductase iron-sulfur protein family. Component of complex II composed of eight subunits in plants: four classical SDH subunits SDH1, SDH2, SDH3 and SDH4 (a flavoprotein (FP), an iron-sulfur protein (IP), and a cytochrome b composed of a large and a small subunit.), as well as four subunits unknown in mitochondria from bacteria and heterotrophic eukaryotes. It depends on [2Fe-2S] cluster as a cofactor. [3Fe-4S] cluster serves as cofactor. Requires [4Fe-4S] cluster as cofactor.

It is found in the mitochondrion inner membrane. The enzyme catalyses a quinone + succinate = fumarate + a quinol. Its pathway is carbohydrate metabolism; tricarboxylic acid cycle; fumarate from succinate (eukaryal route): step 1/1. Its function is as follows. Iron-sulfur protein (IP) subunit of succinate dehydrogenase (SDH) that is involved in complex II of the mitochondrial electron transport chain and is responsible for transferring electrons from succinate to ubiquinone (coenzyme Q). This Oryza sativa subsp. japonica (Rice) protein is Succinate dehydrogenase [ubiquinone] iron-sulfur subunit 1, mitochondrial.